Reading from the N-terminus, the 448-residue chain is Methylenetetrahydrofolate--tRNA-(uracil-5-)-methyltransferase TrmFO (448 aa).

FAD is bound at residue 13–18; it reads GAGLAG.

It belongs to the MnmG family. TrmFO subfamily. FAD serves as cofactor.

It localises to the cytoplasm. The catalysed reaction is uridine(54) in tRNA + (6R)-5,10-methylene-5,6,7,8-tetrahydrofolate + NADH + H(+) = 5-methyluridine(54) in tRNA + (6S)-5,6,7,8-tetrahydrofolate + NAD(+). The enzyme catalyses uridine(54) in tRNA + (6R)-5,10-methylene-5,6,7,8-tetrahydrofolate + NADPH + H(+) = 5-methyluridine(54) in tRNA + (6S)-5,6,7,8-tetrahydrofolate + NADP(+). Catalyzes the folate-dependent formation of 5-methyl-uridine at position 54 (M-5-U54) in all tRNAs. This is Methylenetetrahydrofolate--tRNA-(uracil-5-)-methyltransferase TrmFO from Streptococcus pyogenes serotype M3 (strain ATCC BAA-595 / MGAS315).